Reading from the N-terminus, the 91-residue chain is Probable Fe(2+)-trafficking protein (91 aa).

The protein belongs to the Fe(2+)-trafficking protein family.

In terms of biological role, could be a mediator in iron transactions between iron acquisition and iron-requiring processes, such as synthesis and/or repair of Fe-S clusters in biosynthetic enzymes. The polypeptide is Probable Fe(2+)-trafficking protein (Shewanella amazonensis (strain ATCC BAA-1098 / SB2B)).